The following is a 312-amino-acid chain: tRNA uridine(34) hydroxylase (312 aa).

A Rhodanese domain is found at 124–218; it reads SDPEVLLIDT…YLEEVPQEQT (95 aa). Cys-178 (cysteine persulfide intermediate) is an active-site residue. 2 stretches are compositionally biased toward basic and acidic residues: residues 279 to 294 and 302 to 312; these read TRES…ELAR and IGRDPRQLNEA. Positions 279–312 are disordered; it reads TRESARERQKQIELARARNQPHPIGRDPRQLNEA.

Belongs to the TrhO family.

The enzyme catalyses uridine(34) in tRNA + AH2 + O2 = 5-hydroxyuridine(34) in tRNA + A + H2O. Catalyzes oxygen-dependent 5-hydroxyuridine (ho5U) modification at position 34 in tRNAs. In Ectopseudomonas mendocina (strain ymp) (Pseudomonas mendocina), this protein is tRNA uridine(34) hydroxylase.